The chain runs to 320 residues: Probable 5-dehydro-4-deoxyglucarate dehydratase (320 aa).

This sequence belongs to the DapA family.

It carries out the reaction 5-dehydro-4-deoxy-D-glucarate + H(+) = 2,5-dioxopentanoate + CO2 + H2O. The protein operates within carbohydrate acid metabolism; D-glucarate degradation; 2,5-dioxopentanoate from D-glucarate: step 2/2. This Streptomyces griseus subsp. griseus (strain JCM 4626 / CBS 651.72 / NBRC 13350 / KCC S-0626 / ISP 5235) protein is Probable 5-dehydro-4-deoxyglucarate dehydratase.